Reading from the N-terminus, the 307-residue chain is MGDLPTTFDKPVHIAVIGGTGLGQLEGFEPIAALNPITPWGAPASPIQILSHKGVNVAFLARHGIHHQFAPHEVPNRANIAALRHIGVRCVIAFSAVGSLQEEIKPMDFVVPDQVIDRTKGVRPFTFFEGGVVGHVGFADPFDAGLAKVVKTCAEHMEGDGVVLHEKGTVIVMEGPQFSTRAESHMYRSWGGSVINMSTLPEAKLAREAEMAYQVIAMATDYDCWHSFEDVNVEMVGKYMKANSKNAKRLVGAVLDRLADLDNSDLVLAKHWQGASQGAVKFMTKPEGRDPEAMKRVEYLFPGFWEE.

Phosphate-binding positions include threonine 20, 62 to 63, and 95 to 96; these read RH and SA. Methionine 197 contacts substrate. Serine 198 provides a ligand contact to phosphate. A substrate-binding site is contributed by 221 to 223; sequence DYD.

It belongs to the PNP/MTAP phosphorylase family. MTAP subfamily. In terms of assembly, homotrimer.

The protein localises to the cytoplasm. Its subcellular location is the nucleus. It carries out the reaction S-methyl-5'-thioadenosine + phosphate = 5-(methylsulfanyl)-alpha-D-ribose 1-phosphate + adenine. It participates in amino-acid biosynthesis; L-methionine biosynthesis via salvage pathway; S-methyl-5-thio-alpha-D-ribose 1-phosphate from S-methyl-5'-thioadenosine (phosphorylase route): step 1/1. In terms of biological role, catalyzes the reversible phosphorylation of S-methyl-5'-thioadenosine (MTA) to adenine and 5-methylthioribose-1-phosphate. Involved in the breakdown of MTA, a major by-product of polyamine biosynthesis. Responsible for the first step in the methionine salvage pathway after MTA has been generated from S-adenosylmethionine. Has broad substrate specificity with 6-aminopurine nucleosides as preferred substrates. This is S-methyl-5'-thioadenosine phosphorylase from Fusarium vanettenii (strain ATCC MYA-4622 / CBS 123669 / FGSC 9596 / NRRL 45880 / 77-13-4) (Fusarium solani subsp. pisi).